The chain runs to 219 residues: Orotidine 5'-phosphate decarboxylase (219 aa).

Residues D10, K32, D58–T67, S113, P163–Y173, G186, and R187 each bind substrate. K60 (proton donor) is an active-site residue.

The protein belongs to the OMP decarboxylase family. Type 1 subfamily. Homodimer.

The enzyme catalyses orotidine 5'-phosphate + H(+) = UMP + CO2. Its pathway is pyrimidine metabolism; UMP biosynthesis via de novo pathway; UMP from orotate: step 2/2. In terms of biological role, catalyzes the decarboxylation of orotidine 5'-monophosphate (OMP) to uridine 5'-monophosphate (UMP). In Thermoplasma volcanium (strain ATCC 51530 / DSM 4299 / JCM 9571 / NBRC 15438 / GSS1), this protein is Orotidine 5'-phosphate decarboxylase.